The sequence spans 110 residues: Nucleoid-associated protein PERMA_0533 (110 aa).

Belongs to the YbaB/EbfC family. Homodimer.

It is found in the cytoplasm. The protein resides in the nucleoid. In terms of biological role, binds to DNA and alters its conformation. May be involved in regulation of gene expression, nucleoid organization and DNA protection. The chain is Nucleoid-associated protein PERMA_0533 from Persephonella marina (strain DSM 14350 / EX-H1).